The sequence spans 430 residues: 3-phosphoshikimate 1-carboxyvinyltransferase (430 aa).

3 residues coordinate 3-phosphoshikimate: Lys33, Ser34, and Arg38. Residue Lys33 participates in phosphoenolpyruvate binding. 2 residues coordinate phosphoenolpyruvate: Gly101 and Arg129. 3-phosphoshikimate is bound by residues Ser172, Ser173, Gln174, Ser201, Glu319, and His346. A phosphoenolpyruvate-binding site is contributed by Gln174. Glu319 functions as the Proton acceptor in the catalytic mechanism. Residues Arg350, Arg391, and Lys416 each coordinate phosphoenolpyruvate.

The protein belongs to the EPSP synthase family. In terms of assembly, monomer.

It is found in the cytoplasm. The enzyme catalyses 3-phosphoshikimate + phosphoenolpyruvate = 5-O-(1-carboxyvinyl)-3-phosphoshikimate + phosphate. It functions in the pathway metabolic intermediate biosynthesis; chorismate biosynthesis; chorismate from D-erythrose 4-phosphate and phosphoenolpyruvate: step 6/7. Functionally, catalyzes the transfer of the enolpyruvyl moiety of phosphoenolpyruvate (PEP) to the 5-hydroxyl of shikimate-3-phosphate (S3P) to produce enolpyruvyl shikimate-3-phosphate and inorganic phosphate. This Corynebacterium glutamicum (strain ATCC 13032 / DSM 20300 / JCM 1318 / BCRC 11384 / CCUG 27702 / LMG 3730 / NBRC 12168 / NCIMB 10025 / NRRL B-2784 / 534) protein is 3-phosphoshikimate 1-carboxyvinyltransferase.